Reading from the N-terminus, the 146-residue chain is Hemoglobin subunit beta (146 aa).

Val-1 carries the N-acetylvaline modification. Positions His-2–His-146 constitute a Globin domain. A Phosphoserine modification is found at Ser-44. N6-acetyllysine is present on Lys-59. Position 63 (His-63) interacts with heme b. N6-acetyllysine is present on Lys-82. Heme b is bound at residue His-92. Cys-93 is modified (S-nitrosocysteine). An N6-acetyllysine modification is found at Lys-144.

The protein belongs to the globin family. Heterotetramer of two alpha chains and two beta chains. As to expression, red blood cells.

In terms of biological role, involved in oxygen transport from the lung to the various peripheral tissues. The chain is Hemoglobin subunit beta (HBB) from Spalax ehrenbergi (Middle East blind mole rat).